The primary structure comprises 250 residues: 5-oxoprolinase subunit A (250 aa).

The protein belongs to the LamB/PxpA family. As to quaternary structure, forms a complex composed of PxpA, PxpB and PxpC.

It carries out the reaction 5-oxo-L-proline + ATP + 2 H2O = L-glutamate + ADP + phosphate + H(+). Functionally, catalyzes the cleavage of 5-oxoproline to form L-glutamate coupled to the hydrolysis of ATP to ADP and inorganic phosphate. The protein is 5-oxoprolinase subunit A of Chromohalobacter salexigens (strain ATCC BAA-138 / DSM 3043 / CIP 106854 / NCIMB 13768 / 1H11).